Here is a 453-residue protein sequence, read N- to C-terminus: Choline kinase alpha (453 aa).

The disordered stretch occupies residues 22-81; that stretch reads CGGSAAPTPGVGQQRDAAGELESKQLGGRSQPLALPPPPPPPLPLPPPPSPPLADEQPEP. Positions 55–73 are enriched in pro residues; sequence ALPPPPPPPLPLPPPPSPP. Position 71 is a phosphoserine (S71). ATP-binding positions include 113 to 119, R142, and 203 to 209; these read RGGLSNM and QFIPSRR. 115–117 serves as a coordination point for phosphocholine; that stretch reads GLS. K243 carries the N6-acetyllysine modification. At S275 the chain carries Phosphoserine. Residues Q304 and D326 each coordinate ATP.

This sequence belongs to the choline/ethanolamine kinase family. Heterodimer with CHKB. Homodimer. As to quaternary structure, monomer; acetylation by KAT5 promotes dissociation of the homodimer and monomerization. Phosphorylated at Ser-275 by AMPK in response to glucose deprivation, leading to localization to lipid droplets. In terms of processing, acetylated by KAT5 at Lys-243 following phosphorylation by AMPK, leading to monomerization and conversion into a tyrosine-protein kinase. As to expression, testis, brain, lung, kidney and liver.

It is found in the cytoplasm. The protein localises to the cytosol. The protein resides in the lipid droplet. The catalysed reaction is choline + ATP = phosphocholine + ADP + H(+). The enzyme catalyses ethanolamine + ATP = phosphoethanolamine + ADP + H(+). It catalyses the reaction L-tyrosyl-[protein] + ATP = O-phospho-L-tyrosyl-[protein] + ADP + H(+). Its pathway is phospholipid metabolism; phosphatidylcholine biosynthesis; phosphocholine from choline: step 1/1. The protein operates within phospholipid metabolism; phosphatidylethanolamine biosynthesis; phosphatidylethanolamine from ethanolamine: step 1/3. Plays a key role in phospholipid biosynthesis by catalyzing the phosphorylation of free choline to phosphocholine, the first step in phosphatidylcholine biosynthesis. Also phosphorylates ethanolamine, thereby contributing to phosphatidylethanolamine biosynthesis. Has higher activity with choline. In terms of biological role, this isoform plays a key role in lipolysis of lipid droplets following glucose deprivation. In response to glucose deprivation, phosphorylated by AMPK, promoting localization to lipid droplets. Phosphorylation is followed by acetylation by KAT5, leading to dissociation of the homodimer into a monomer. Monomeric CHKA isoform 1 is converted into a tyrosine-protein kinase, which phosphorylates lipid droplet structural proteins PLIN2 and PLIN3, leading to lipolysis of lipid droplets. The polypeptide is Choline kinase alpha (Chka) (Rattus norvegicus (Rat)).